Here is a 451-residue protein sequence, read N- to C-terminus: Probable glycine dehydrogenase (decarboxylating) subunit 1 (451 aa).

Belongs to the GcvP family. N-terminal subunit subfamily. As to quaternary structure, the glycine cleavage system is composed of four proteins: P, T, L and H. In this organism, the P 'protein' is a heterodimer of two subunits.

The catalysed reaction is N(6)-[(R)-lipoyl]-L-lysyl-[glycine-cleavage complex H protein] + glycine + H(+) = N(6)-[(R)-S(8)-aminomethyldihydrolipoyl]-L-lysyl-[glycine-cleavage complex H protein] + CO2. The glycine cleavage system catalyzes the degradation of glycine. The P protein binds the alpha-amino group of glycine through its pyridoxal phosphate cofactor; CO(2) is released and the remaining methylamine moiety is then transferred to the lipoamide cofactor of the H protein. This is Probable glycine dehydrogenase (decarboxylating) subunit 1 from Thioalkalivibrio sulfidiphilus (strain HL-EbGR7).